The sequence spans 157 residues: MGVIEFLFALAQDMILAAIPAVGFAMVFNVPVRALRWCALLGAIGHGSRMILMTSGLNIEWSTFMASMLVGTIGIQWSRWYLAHPKVFTVAAVIPMFPGISAYTAMISAVKISQLGYSEPLMITLLTNFLTASSIVGALSIGLSIPGLWLYRKRPRV.

4 helical membrane passes run 8–28 (FALAQDMILAAIPAVGFAMVF), 50–70 (MILMTSGLNIEWSTFMASMLV), 87–107 (VFTVAAVIPMFPGISAYTAMI), and 129–149 (FLTASSIVGALSIGLSIPGLW).

Belongs to the ThrE exporter (TC 2.A.79) family. The transporter is composed of YjjB and YjjP.

It is found in the cell inner membrane. In terms of biological role, involved in succinate export with YjjP. Both proteins are required for export. This chain is Probable succinate transporter subunit YjjB, found in Escherichia coli (strain ATCC 8739 / DSM 1576 / NBRC 3972 / NCIMB 8545 / WDCM 00012 / Crooks).